A 426-amino-acid polypeptide reads, in one-letter code: Histidine--tRNA ligase (426 aa).

This sequence belongs to the class-II aminoacyl-tRNA synthetase family. As to quaternary structure, homodimer.

It is found in the cytoplasm. It carries out the reaction tRNA(His) + L-histidine + ATP = L-histidyl-tRNA(His) + AMP + diphosphate + H(+). In Streptococcus equi subsp. equi (strain 4047), this protein is Histidine--tRNA ligase.